Consider the following 417-residue polypeptide: Serine--tRNA ligase (417 aa).

Position 226–228 (226–228 (TSE)) interacts with L-serine. ATP is bound by residues 257–259 (RRE) and Val273. Glu280 contributes to the L-serine binding site. Residue 344 to 347 (EVTS) coordinates ATP. L-serine is bound at residue Thr379.

It belongs to the class-II aminoacyl-tRNA synthetase family. Type-1 seryl-tRNA synthetase subfamily. In terms of assembly, homodimer. The tRNA molecule binds across the dimer.

Its subcellular location is the cytoplasm. The enzyme catalyses tRNA(Ser) + L-serine + ATP = L-seryl-tRNA(Ser) + AMP + diphosphate + H(+). It catalyses the reaction tRNA(Sec) + L-serine + ATP = L-seryl-tRNA(Sec) + AMP + diphosphate + H(+). Its pathway is aminoacyl-tRNA biosynthesis; selenocysteinyl-tRNA(Sec) biosynthesis; L-seryl-tRNA(Sec) from L-serine and tRNA(Sec): step 1/1. Functionally, catalyzes the attachment of serine to tRNA(Ser). Is also able to aminoacylate tRNA(Sec) with serine, to form the misacylated tRNA L-seryl-tRNA(Sec), which will be further converted into selenocysteinyl-tRNA(Sec). The protein is Serine--tRNA ligase of Tropheryma whipplei (strain TW08/27) (Whipple's bacillus).